The sequence spans 132 residues: uncharacterized protein (132 aa).

This is an uncharacterized protein from Archaeoglobus fulgidus (strain ATCC 49558 / DSM 4304 / JCM 9628 / NBRC 100126 / VC-16).